The primary structure comprises 431 residues: Histidinol dehydrogenase (431 aa).

Residues Y130, Q191, and N214 each contribute to the NAD(+) site. The substrate site is built by S237, Q261, and H264. Residues Q261 and H264 each contribute to the Zn(2+) site. Active-site proton acceptor residues include E329 and H330. Positions 330, 363, 417, and 422 each coordinate substrate. D363 contacts Zn(2+). H422 is a Zn(2+) binding site.

This sequence belongs to the histidinol dehydrogenase family. Zn(2+) serves as cofactor.

It carries out the reaction L-histidinol + 2 NAD(+) + H2O = L-histidine + 2 NADH + 3 H(+). It functions in the pathway amino-acid biosynthesis; L-histidine biosynthesis; L-histidine from 5-phospho-alpha-D-ribose 1-diphosphate: step 9/9. Its function is as follows. Catalyzes the sequential NAD-dependent oxidations of L-histidinol to L-histidinaldehyde and then to L-histidine. In Psychrobacter arcticus (strain DSM 17307 / VKM B-2377 / 273-4), this protein is Histidinol dehydrogenase.